The following is a 216-amino-acid chain: MTDELDPALIERARKLFAGDWQFIWASPSVETLPPMQGLEVAFAGRSNVGKSSLINALTGRNGLARTSHTPGRTQELIFFEGPADAGFRLVDMPGYGYAAAPKTKIASWTKLIHQFLQGRATLVRVYVLIDARHGIKDVDNEVLTTLDKSAVSYQIVLTKADQVKPAELAERVAATTEALRKHPAAFPEIVVTSSRNASGMPELRAAIIKLVAERS.

One can recognise an EngB-type G domain in the interval 37 to 214 (QGLEVAFAGR…RAAIIKLVAE (178 aa)). GTP contacts are provided by residues 45-52 (GRSNVGKS), 72-76 (GRTQE), 92-95 (DMPG), 159-162 (TKAD), and 193-195 (TSS). Mg(2+) contacts are provided by Ser52 and Thr74.

This sequence belongs to the TRAFAC class TrmE-Era-EngA-EngB-Septin-like GTPase superfamily. EngB GTPase family. The cofactor is Mg(2+).

In terms of biological role, necessary for normal cell division and for the maintenance of normal septation. The chain is Probable GTP-binding protein EngB from Rhodopseudomonas palustris (strain BisA53).